The primary structure comprises 527 residues: Amino acid transporter heavy chain SLC3A2 (527 aa).

The segment at 1–31 (MSQDTEVDMKDVELNELEPEKQPMNAADGAA) is disordered. Residues 1-75 (MSQDTEVDMK…AGSPGWVRTR (75 aa)) lie on the Cytoplasmic side of the membrane. The residue at position 2 (serine 2) is a Phosphoserine. Threonine 5 carries the post-translational modification Phosphothreonine. Positions 7 to 21 (VDMKDVELNELEPEK) are enriched in basic and acidic residues. Residue lysine 42 forms a Glycyl lysine isopeptide (Lys-Gly) (interchain with G-Cter in ubiquitin) linkage. Phosphoserine is present on serine 58. Residue lysine 59 forms a Glycyl lysine isopeptide (Lys-Gly) (interchain with G-Cter in SUMO2) linkage. A helical; Signal-anchor for type II membrane protein membrane pass occupies residues 76-98 (WALLLLFWLGWLGMLAGAVVIIV). At 99–527 (RAPRCRELPV…GLLLQFPFVA (429 aa)) the chain is on the extracellular side. 4 N-linked (GlcNAc...) asparagine glycosylation sites follow: asparagine 166, asparagine 249, asparagine 259, and asparagine 263. Serine 300 is subject to Phosphoserine. 3 N-linked (GlcNAc...) asparagine glycosylation sites follow: asparagine 318, asparagine 386, and asparagine 400. A Phosphoserine modification is found at serine 421. Residue asparagine 510 is glycosylated (N-linked (GlcNAc...) asparagine).

The protein belongs to the SLC3A transporter family. Disulfide-linked heterodimer with a non-glycosylated light chain (SLC7A5, SLC7A6, SLC7A7, SLC7A8, SLC7A10 or SLC7A11). Interacts with TLCD3A/CT120 and ICAM1. Constitutively and specifically associates with beta-1 integrins (alpha-2/beta-1, alpha-3/beta-1, alpha-5/beta-1 and alpha-6/beta-1), but minimally with alpha-4/beta-1. Interacts with LAPTM4B; recruits SLC3A2 and SLC7A5 to lysosomes to promote leucine uptake into these organelles and is required for mTORC1 activation. Post-translationally, phosphorylation on Ser-300 and on Ser-421 by ecto-protein kinases favors heterotypic cell-cell interactions. N-glycosylated; N-glycosylation is crucial for trafficking and stability of SLC3A2 to the plasma membrane. In terms of tissue distribution, in brain expressed on capillary endothelia in cerebral cortex (at protein level). Highest expression in kidney, jejunum, ileum, colon, placenta, testis and spleen. Lower levels found in liver, lung and brain with weakest expression in heart. Expressed in retina, inner blood-retinal barrier of retina, retinal vascular endothelial cells. Also expressed in C6 glioma cells and in the retinal capillary endothelial cell line TR-iBRB2.

It localises to the apical cell membrane. The protein localises to the cell membrane. It is found in the cell junction. Its subcellular location is the lysosome membrane. The protein resides in the melanosome. It localises to the basolateral cell membrane. In terms of biological role, acts as a chaperone that facilitates biogenesis and trafficking of functional transporters heterodimers to the plasma membrane. Forms heterodimer with SLC7 family transporters (SLC7A5, SLC7A6, SLC7A7, SLC7A8, SLC7A10 and SLC7A11), a group of amino-acid antiporters. Heterodimers function as amino acids exchangers, the specificity of the substrate depending on the SLC7A subunit. Heterodimers formed by SLC3A2/SLC7A6 or SLC3A2/SLC7A7 mediate the uptake of dibasic amino acids. Heterodimer SLC3A2/SLC7A11 functions as an antiporter by mediating the exchange of extracellular anionic L-cystine and intracellular L-glutamate across the cellular plasma membrane. SLC3A2/SLC7A10 translocates small neutral L- and D-amino acids across the plasma membrane. SLC3A2/SLC75 or SLC3A2/SLC7A8 translocates neutral amino acids with broad specificity, thyroid hormones and L-DOPA. SLC3A2 is essential for plasma membrane localization, stability, and the transport activity of SLC7A5 and SLC7A8. When associated with LAPTM4B, the heterodimer SLC7A5 is recruited to lysosomes to promote leucine uptake into these organelles, and thereby mediates mTORC1 activation. Modulates integrin-related signaling and is essential for integrin-dependent cell spreading, migration and tumor progression. The protein is Amino acid transporter heavy chain SLC3A2 of Rattus norvegicus (Rat).